A 230-amino-acid chain; its full sequence is Leucyl/phenylalanyl-tRNA--protein transferase (230 aa).

Belongs to the L/F-transferase family.

The protein localises to the cytoplasm. The catalysed reaction is N-terminal L-lysyl-[protein] + L-leucyl-tRNA(Leu) = N-terminal L-leucyl-L-lysyl-[protein] + tRNA(Leu) + H(+). The enzyme catalyses N-terminal L-arginyl-[protein] + L-leucyl-tRNA(Leu) = N-terminal L-leucyl-L-arginyl-[protein] + tRNA(Leu) + H(+). It catalyses the reaction L-phenylalanyl-tRNA(Phe) + an N-terminal L-alpha-aminoacyl-[protein] = an N-terminal L-phenylalanyl-L-alpha-aminoacyl-[protein] + tRNA(Phe). Functions in the N-end rule pathway of protein degradation where it conjugates Leu, Phe and, less efficiently, Met from aminoacyl-tRNAs to the N-termini of proteins containing an N-terminal arginine or lysine. In Rhodopseudomonas palustris (strain BisB18), this protein is Leucyl/phenylalanyl-tRNA--protein transferase.